A 206-amino-acid polypeptide reads, in one-letter code: MGRYLGPSCRLCRREGIKLYLKGEKCYTDKCPLAKRGYAPGQHGQEKKKLTQYGMQLREKQKLKRYYGILERQFVRYYERAERMRGITGENLLQLLERRLDNVVYRLGFAVSRAQARQLVSHGHIEVNGKKVDIPSYLVKPGDVISVKESSRSMELIKNNLEMGRNVPDWLELNKDAFEGRVVSLPRREHIDLPVQEHLIVELYSK.

The region spanning 98–161 is the S4 RNA-binding domain; it reads RRLDNVVYRL…RSMELIKNNL (64 aa).

Belongs to the universal ribosomal protein uS4 family. As to quaternary structure, part of the 30S ribosomal subunit. Contacts protein S5. The interaction surface between S4 and S5 is involved in control of translational fidelity.

Its function is as follows. One of the primary rRNA binding proteins, it binds directly to 16S rRNA where it nucleates assembly of the body of the 30S subunit. With S5 and S12 plays an important role in translational accuracy. In Caldanaerobacter subterraneus subsp. tengcongensis (strain DSM 15242 / JCM 11007 / NBRC 100824 / MB4) (Thermoanaerobacter tengcongensis), this protein is Small ribosomal subunit protein uS4.